A 172-amino-acid polypeptide reads, in one-letter code: uncharacterized protein (172 aa).

This is an uncharacterized protein from Mycoplasma pneumoniae (strain ATCC 29342 / M129 / Subtype 1) (Mycoplasmoides pneumoniae).